The following is a 210-amino-acid chain: MKRTAVSLCLLTGLLSGCGGAGLDNAQNVRNQTQNQTKPIHVSDRNEAFNRHNENEQFGYVRYQKEQFDGEQQKTPVMNREETAHMISSLTVQLPHIQDAATLVTDREALVVYKTDSKNRELTADQVKKTAASVIPRYYHVYISDNPNHMQSVENYSNLGSGSRDIREIMSGTIQEMKTSPQGSPVSENENANGETRQDMKIDRNDKNAR.

A signal peptide spans 1–17; it reads MKRTAVSLCLLTGLLSG. C18 carries N-palmitoyl cysteine lipidation. Residue C18 is the site of S-diacylglycerol cysteine attachment. A compositionally biased stretch (polar residues) spans 176–195; sequence EMKTSPQGSPVSENENANGE. Residues 176–210 are disordered; the sequence is EMKTSPQGSPVSENENANGETRQDMKIDRNDKNAR. A compositionally biased stretch (basic and acidic residues) spans 196 to 210; sequence TRQDMKIDRNDKNAR.

It is found in the cell membrane. This is an uncharacterized protein from Bacillus subtilis (strain 168).